Here is an 879-residue protein sequence, read N- to C-terminus: Translation initiation factor IF-2 (879 aa).

A disordered region spans residues glutamate 48–arginine 261. Low complexity predominate over residues proline 82–alanine 111. Composition is skewed to pro residues over residues proline 119–proline 142, serine 152–valine 163, and proline 173–proline 197. Low complexity predominate over residues alanine 198–proline 213. The segment covering proline 228–proline 246 has biased composition (gly residues). Residues serine 251–arginine 260 are compositionally biased toward basic residues. The 172-residue stretch at proline 372–leucine 543 folds into the tr-type G domain. A G1 region spans residues glycine 381 to threonine 388. Residue glycine 381–threonine 388 participates in GTP binding. The segment at glycine 406 to histidine 410 is G2. The tract at residues aspartate 431–glycine 434 is G3. GTP-binding positions include aspartate 431 to histidine 435 and asparagine 485 to aspartate 488. Residues asparagine 485–aspartate 488 form a G4 region. The segment at serine 521–leucine 523 is G5.

The protein belongs to the TRAFAC class translation factor GTPase superfamily. Classic translation factor GTPase family. IF-2 subfamily.

It localises to the cytoplasm. One of the essential components for the initiation of protein synthesis. Protects formylmethionyl-tRNA from spontaneous hydrolysis and promotes its binding to the 30S ribosomal subunits. Also involved in the hydrolysis of GTP during the formation of the 70S ribosomal complex. The chain is Translation initiation factor IF-2 from Acidothermus cellulolyticus (strain ATCC 43068 / DSM 8971 / 11B).